Consider the following 800-residue polypeptide: Phenylalanine--tRNA ligase beta subunit (800 aa).

Positions G38 to G147 constitute a tRNA-binding domain. One can recognise a B5 domain in the interval V401–E477. Residues D455, D461, E464, and E465 each coordinate Mg(2+). The FDX-ACB domain maps to P708–R799.

The protein belongs to the phenylalanyl-tRNA synthetase beta subunit family. Type 1 subfamily. Tetramer of two alpha and two beta subunits. Mg(2+) is required as a cofactor.

The protein resides in the cytoplasm. The enzyme catalyses tRNA(Phe) + L-phenylalanine + ATP = L-phenylalanyl-tRNA(Phe) + AMP + diphosphate + H(+). In Anaeromyxobacter dehalogenans (strain 2CP-C), this protein is Phenylalanine--tRNA ligase beta subunit.